The chain runs to 244 residues: Ureidoacrylate amidohydrolase RutB (244 aa).

Asp-38 functions as the Proton acceptor in the catalytic mechanism. Lys-147 is an active-site residue. The active-site Nucleophile is Cys-180.

Belongs to the isochorismatase family. RutB subfamily.

The enzyme catalyses (Z)-3-ureidoacrylate + H2O + H(+) = (Z)-3-aminoacrylate + NH4(+) + CO2. It carries out the reaction (Z)-3-ureidoacrylate + H2O = (Z)-3-aminoacrylate + carbamate + H(+). It catalyses the reaction (Z)-2-methylureidoacrylate + H2O + H(+) = (Z)-2-methylaminoacrylate + NH4(+) + CO2. Hydrolyzes ureidoacrylate to form aminoacrylate and carbamate. The carbamate hydrolyzes spontaneously, thereby releasing one of the nitrogen atoms of the pyrimidine ring as ammonia and one of its carbon atoms as CO2. This chain is Ureidoacrylate amidohydrolase RutB, found in Shigella flexneri serotype X (strain 2002017).